We begin with the raw amino-acid sequence, 209 residues long: Large ribosomal subunit protein uL3 (209 aa).

A disordered region spans residues 127–152 (SGGPSSHGSKFHRHLGSTGQAATPSR). The span at 143-152 (STGQAATPSR) shows a compositional bias: polar residues.

The protein belongs to the universal ribosomal protein uL3 family. Part of the 50S ribosomal subunit. Forms a cluster with proteins L14 and L19.

In terms of biological role, one of the primary rRNA binding proteins, it binds directly near the 3'-end of the 23S rRNA, where it nucleates assembly of the 50S subunit. This is Large ribosomal subunit protein uL3 from Borrelia hermsii (strain HS1 / DAH).